A 1440-amino-acid chain; its full sequence is Pentatricopeptide repeat-containing protein At3g18110, chloroplastic (1440 aa).

The transit peptide at 1–44 directs the protein to the chloroplast; sequence MAVSAGALAFPALSVRATLNPEIKDEQANISSTTSSSQKFTYSR. A compositionally biased stretch (polar residues) spans 63–72; that stretch reads TPSQTLSSPV. The interval 63–84 is disordered; the sequence is TPSQTLSSPVSPIAGTPDSGDV. PPR repeat units follow at residues 224 to 258, 259 to 295, 296 to 330, 331 to 365, 366 to 400, 401 to 431, 437 to 471, 472 to 506, 507 to 541, 542 to 572, 608 to 638, 643 to 678, 680 to 714, 715 to 749, 751 to 785, 786 to 820, 821 to 855, 856 to 890, 891 to 925, 926 to 960, 961 to 995, 996 to 1030, 1031 to 1065, 1066 to 1100, and 1101 to 1135; these read RVQV…GCVP, DLIS…GLRP, DAIT…RCQP, DLWT…GFFP, DAVT…GFGK, DEMT…MKGL, DAIT…GIKP, TLQT…GTKP, DNLA…GHTP, SYTL…MEEL, ENDT…LKEH, KRLI…GWCF, SSTM…GCEA, SESV…GFHF, CSPM…GRTP, DLKT…GPSP, TVES…GFKI, SKSS…GYLP, TIRL…NFKV, ELAI…GLEP, DETT…GLDP, KLDT…GLKL, DRSF…GIEP, TLAT…EVEL, and TTLP…GLEP. A disordered region spans residues 1419–1440; that stretch reads KKKKMGNETNGINTRRKFVRSK.

It belongs to the PPR family. P subfamily.

The protein resides in the plastid. It is found in the chloroplast. Functionally, may play a role in embryogenesis. The sequence is that of Pentatricopeptide repeat-containing protein At3g18110, chloroplastic (EMB1270) from Arabidopsis thaliana (Mouse-ear cress).